We begin with the raw amino-acid sequence, 521 residues long: Bifunctional purine biosynthesis protein PurH (521 aa).

The MGS-like domain occupies 1–145 (MIKQALISVS…KNHRDVTVVV (145 aa)).

Belongs to the PurH family.

It catalyses the reaction (6R)-10-formyltetrahydrofolate + 5-amino-1-(5-phospho-beta-D-ribosyl)imidazole-4-carboxamide = 5-formamido-1-(5-phospho-D-ribosyl)imidazole-4-carboxamide + (6S)-5,6,7,8-tetrahydrofolate. The enzyme catalyses IMP + H2O = 5-formamido-1-(5-phospho-D-ribosyl)imidazole-4-carboxamide. The protein operates within purine metabolism; IMP biosynthesis via de novo pathway; 5-formamido-1-(5-phospho-D-ribosyl)imidazole-4-carboxamide from 5-amino-1-(5-phospho-D-ribosyl)imidazole-4-carboxamide (10-formyl THF route): step 1/1. It functions in the pathway purine metabolism; IMP biosynthesis via de novo pathway; IMP from 5-formamido-1-(5-phospho-D-ribosyl)imidazole-4-carboxamide: step 1/1. The sequence is that of Bifunctional purine biosynthesis protein PurH from Burkholderia vietnamiensis (strain G4 / LMG 22486) (Burkholderia cepacia (strain R1808)).